Reading from the N-terminus, the 326-residue chain is 5-dehydro-2-deoxygluconokinase (326 aa).

This sequence belongs to the carbohydrate kinase PfkB family.

The catalysed reaction is 5-dehydro-2-deoxy-D-gluconate + ATP = 6-phospho-5-dehydro-2-deoxy-D-gluconate + ADP + H(+). Its pathway is polyol metabolism; myo-inositol degradation into acetyl-CoA; acetyl-CoA from myo-inositol: step 5/7. Its function is as follows. Catalyzes the phosphorylation of 5-dehydro-2-deoxy-D-gluconate (2-deoxy-5-keto-D-gluconate or DKG) to 6-phospho-5-dehydro-2-deoxy-D-gluconate (DKGP). The sequence is that of 5-dehydro-2-deoxygluconokinase from Lacticaseibacillus casei (Lactobacillus casei).